Consider the following 118-residue polypeptide: Large ribosomal subunit protein uL18 (118 aa).

The protein belongs to the universal ribosomal protein uL18 family. In terms of assembly, part of the 50S ribosomal subunit; part of the 5S rRNA/L5/L18/L25 subcomplex. Contacts the 5S and 23S rRNAs.

Its function is as follows. This is one of the proteins that bind and probably mediate the attachment of the 5S RNA into the large ribosomal subunit, where it forms part of the central protuberance. This is Large ribosomal subunit protein uL18 from Sulfurimonas denitrificans (strain ATCC 33889 / DSM 1251) (Thiomicrospira denitrificans (strain ATCC 33889 / DSM 1251)).